A 250-amino-acid polypeptide reads, in one-letter code: NH(3)-dependent NAD(+) synthetase (250 aa).

30–37 serves as a coordination point for ATP; sequence GVSGGIDS. D36 contributes to the Mg(2+) binding site. R117 serves as a coordination point for deamido-NAD(+). Residue T137 participates in ATP binding. E142 is a Mg(2+) binding site. K150 and D157 together coordinate deamido-NAD(+). 2 residues coordinate ATP: K166 and S188. Position 234-235 (234-235) interacts with deamido-NAD(+); it reads HK.

This sequence belongs to the NAD synthetase family. In terms of assembly, homodimer.

It carries out the reaction deamido-NAD(+) + NH4(+) + ATP = AMP + diphosphate + NAD(+) + H(+). The protein operates within cofactor biosynthesis; NAD(+) biosynthesis; NAD(+) from deamido-NAD(+) (ammonia route): step 1/1. In terms of biological role, catalyzes the ATP-dependent amidation of deamido-NAD to form NAD. Uses ammonia as a nitrogen source. This chain is NH(3)-dependent NAD(+) synthetase, found in Mannheimia succiniciproducens (strain KCTC 0769BP / MBEL55E).